Consider the following 120-residue polypeptide: NAD(P)H-quinone oxidoreductase subunit 3, chloroplastic (120 aa).

3 consecutive transmembrane segments (helical) span residues 9–29 (IFWA…LISG), 64–84 (MFAL…PWAV), and 88–108 (ILGV…VVGS).

It belongs to the complex I subunit 3 family. In terms of assembly, NDH is composed of at least 16 different subunits, 5 of which are encoded in the nucleus.

It is found in the plastid. The protein resides in the chloroplast thylakoid membrane. The catalysed reaction is a plastoquinone + NADH + (n+1) H(+)(in) = a plastoquinol + NAD(+) + n H(+)(out). It catalyses the reaction a plastoquinone + NADPH + (n+1) H(+)(in) = a plastoquinol + NADP(+) + n H(+)(out). In terms of biological role, NDH shuttles electrons from NAD(P)H:plastoquinone, via FMN and iron-sulfur (Fe-S) centers, to quinones in the photosynthetic chain and possibly in a chloroplast respiratory chain. The immediate electron acceptor for the enzyme in this species is believed to be plastoquinone. Couples the redox reaction to proton translocation, and thus conserves the redox energy in a proton gradient. This Nymphaea alba (White water-lily) protein is NAD(P)H-quinone oxidoreductase subunit 3, chloroplastic.